The chain runs to 545 residues: Membrane protein insertase YidC (545 aa).

Residues 6-26 (NILLIGLLFVSFLLWQQWQAD) form a helical membrane-spanning segment. The segment at 44–65 (STVADAHSSDVPDADSAVPEAT) is disordered. The next 4 membrane-spanning stretches (helical) occupy residues 346-366 (LLMF…LITL), 424-444 (GGCL…WVLL), 461-481 (LSVQ…MFVM), and 504-524 (VIFT…WLVG).

It belongs to the OXA1/ALB3/YidC family. Type 1 subfamily. As to quaternary structure, interacts with the Sec translocase complex via SecD. Specifically interacts with transmembrane segments of nascent integral membrane proteins during membrane integration.

The protein localises to the cell inner membrane. In terms of biological role, required for the insertion and/or proper folding and/or complex formation of integral membrane proteins into the membrane. Involved in integration of membrane proteins that insert both dependently and independently of the Sec translocase complex, as well as at least some lipoproteins. Aids folding of multispanning membrane proteins. This chain is Membrane protein insertase YidC, found in Shewanella pealeana (strain ATCC 700345 / ANG-SQ1).